The chain runs to 305 residues: Ribosomal RNA small subunit methyltransferase H (305 aa).

Residues 49 to 51, Asp68, Phe100, Asp116, and Gln123 each bind S-adenosyl-L-methionine; that span reads GGH.

Belongs to the methyltransferase superfamily. RsmH family.

Its subcellular location is the cytoplasm. The catalysed reaction is cytidine(1402) in 16S rRNA + S-adenosyl-L-methionine = N(4)-methylcytidine(1402) in 16S rRNA + S-adenosyl-L-homocysteine + H(+). Specifically methylates the N4 position of cytidine in position 1402 (C1402) of 16S rRNA. This is Ribosomal RNA small subunit methyltransferase H from Synechocystis sp. (strain ATCC 27184 / PCC 6803 / Kazusa).